Reading from the N-terminus, the 82-residue chain is Ice-structuring protein A (82 aa).

The N-terminal stretch at 1–23 (MALSLFTVGQLIFLFWTMRITEA) is a signal peptide. Residues 24-44 (SPDPAAKAAPAAAAAPAAAAP) constitute a propeptide, removed by a dipeptidylpeptidase. Arg-81 bears the Arginine amide mark.

It belongs to the type-I AFP family. As to expression, detected in liver and in blood serum (at protein level).

It is found in the secreted. Contributes to protect fish blood from freezing at subzero sea water temperatures. Lowers the blood freezing point. Binds to nascent ice crystals and prevents further growth. This Pseudopleuronectes americanus (Winter flounder) protein is Ice-structuring protein A.